Reading from the N-terminus, the 870-residue chain is Leucine--tRNA ligase (870 aa).

Positions 42–52 (PYPSGKLHMGH) match the 'HIGH' region motif. Positions 629-633 (KMSKS) match the 'KMSKS' region motif. Position 632 (lysine 632) interacts with ATP.

This sequence belongs to the class-I aminoacyl-tRNA synthetase family.

It is found in the cytoplasm. It catalyses the reaction tRNA(Leu) + L-leucine + ATP = L-leucyl-tRNA(Leu) + AMP + diphosphate. The polypeptide is Leucine--tRNA ligase (Ectopseudomonas mendocina (strain ymp) (Pseudomonas mendocina)).